A 590-amino-acid chain; its full sequence is L-gulonolactone oxidase 5 (590 aa).

The first 31 residues, 1–31 (MAFGYSPSYCSFWRTLLGLYCLFTLVHTVIS), serve as a signal peptide directing secretion. In terms of domain architecture, FAD-binding PCMH-type spans 60–242 (STCRAANVAY…SQVTFELQPM (183 aa)).

Belongs to the oxygen-dependent FAD-linked oxidoreductase family. It depends on FAD as a cofactor.

The enzyme catalyses L-gulono-1,4-lactone + O2 = L-ascorbate + H2O2 + H(+). The protein operates within cofactor biosynthesis; L-ascorbate biosynthesis. In terms of biological role, catalyzes the oxidation of L-gulono-1,4-lactone to ascorbic acid. L-gulono-1,4-lactone is oxidized to hydrogen peroxide and L-xylo-hexulonolactone which spontaneously isomerizes to L-ascorbate. This is L-gulonolactone oxidase 5 from Arabidopsis thaliana (Mouse-ear cress).